A 515-amino-acid polypeptide reads, in one-letter code: Thioredoxin domain-containing protein 2 (515 aa).

A disordered region spans residues 1 to 23; sequence MTLNNGGKANERGSNENPLQALS. Phosphoserine occurs at positions 14 and 39. Positions 51–390 are disordered; sequence TLHMSTEESE…NTIKSSEEDV (340 aa). Composition is skewed to polar residues over residues 61–75 and 85–136; these read FPQQVSSTPMFSENT and KPSS…TNST. 21 repeat units span residues 92–106, 107–121, 122–136, 137–151, 152–166, 167–181, 182–196, 197–211, 212–226, 227–241, 242–256, 257–271, 272–286, 287–301, 302–316, 317–331, 332–346, 347–362, 363–375, 376–390, and 391–405. A 21 X 15 AA approximate tandem repeat of Q-P-K-X-G-D-I-P-K-S-[PS]-E-[KE]-X-I region spans residues 92–405; sequence QLKQENISKS…KLLGLGAEIE (314 aa). 2 stretches are compositionally biased toward basic and acidic residues: residues 137-293 and 302-358; these read HYRE…ETKV and QSKE…KSPE. Phosphoserine is present on Ser-146. Residues 375 to 384 are compositionally biased toward polar residues; that stretch reads IQSQEGNTIK. One can recognise a Thioredoxin domain in the interval 398–515; sequence LGLGAEIETL…KLERSISELK (118 aa). A disulfide bond links Cys-442 and Cys-445.

Testis-specific. Strongly expressed in the testicular seminiferous tubules, mostly in the round spermatids.

The protein resides in the cytoplasm. Functionally, probably plays a regulatory role in sperm development. May participate in regulation of fibrous sheath (FS) assembly by supporting the formation of disulfide bonds during sperm tail morphogenesis. May also be required to rectify incorrect disulfide pairing and generate suitable pairs between the FS constituents. Can reduce disulfide bonds in vitro in the presence of NADP and thioredoxin reductase. In Mus musculus (Mouse), this protein is Thioredoxin domain-containing protein 2 (Txndc2).